The primary structure comprises 371 residues: Assembly protein G7 (371 aa).

It belongs to the chordopoxvirinae G7 family. Part of a complex composed of A30, G7, F10 kinase, A15, D2, D3, and J1. In terms of processing, phosphorylated on serines by F10 kinase, phosphorylation state is regulated by H1 phosphatase. Undergoes proteolytic processing during morphogenesis, probably required for the transformation of immature virions (IV) into mature virions (MV).

The protein resides in the host cytoplasm. It localises to the virion. Its function is as follows. Late protein which is a part of a large complex required for early virion morphogenesis. This complex participates in the formation of virosomes and the incorporation of virosomal contents into nascent immature virions. The chain is Assembly protein G7 from Vaccinia virus (strain Copenhagen) (VACV).